We begin with the raw amino-acid sequence, 196 residues long: MAPMECVRRRNVGELVLRCAATLVCMLSLMLLVRDQQIAVQEVGVTSVTTQLRYSSSTGLVYLVYANGLVALYCFVVVLTSSFNGGSVMRRNKSGAWALFVLDQVLACILLSAASAASEIAFLVEKGAKKTIWDSKCIVYGHFCRMLEVSIATSFIAVIMLGSICVLSAKQLFQQYTHYARIVNMVKLKSTPNSLL.

Residues 1–11 are Cytoplasmic-facing; sequence MAPMECVRRRN. A helical transmembrane segment spans residues 12 to 32; it reads VGELVLRCAATLVCMLSLMLL. The Extracellular segment spans residues 33–58; that stretch reads VRDQQIAVQEVGVTSVTTQLRYSSST. A helical membrane pass occupies residues 59 to 79; that stretch reads GLVYLVYANGLVALYCFVVVL. Topologically, residues 80-95 are cytoplasmic; it reads TSSFNGGSVMRRNKSG. The helical transmembrane segment at 96-116 threads the bilayer; the sequence is AWALFVLDQVLACILLSAASA. The Extracellular segment spans residues 117–148; it reads ASEIAFLVEKGAKKTIWDSKCIVYGHFCRMLE. A helical transmembrane segment spans residues 149-169; sequence VSIATSFIAVIMLGSICVLSA. The Cytoplasmic segment spans residues 170–196; sequence KQLFQQYTHYARIVNMVKLKSTPNSLL.

Belongs to the Casparian strip membrane proteins (CASP) family. As to quaternary structure, homodimer and heterodimers.

Its subcellular location is the cell membrane. The sequence is that of CASP-like protein 2U1 from Pteridium aquilinum subsp. aquilinum (Bracken fern).